The primary structure comprises 289 residues: Bifunctional protein FolD (289 aa).

Residues 165 to 167 and Ser190 contribute to the NADP(+) site; that span reads GAS.

Belongs to the tetrahydrofolate dehydrogenase/cyclohydrolase family. In terms of assembly, homodimer.

The catalysed reaction is (6R)-5,10-methylene-5,6,7,8-tetrahydrofolate + NADP(+) = (6R)-5,10-methenyltetrahydrofolate + NADPH. It catalyses the reaction (6R)-5,10-methenyltetrahydrofolate + H2O = (6R)-10-formyltetrahydrofolate + H(+). Its pathway is one-carbon metabolism; tetrahydrofolate interconversion. Functionally, catalyzes the oxidation of 5,10-methylenetetrahydrofolate to 5,10-methenyltetrahydrofolate and then the hydrolysis of 5,10-methenyltetrahydrofolate to 10-formyltetrahydrofolate. This Ralstonia nicotianae (strain ATCC BAA-1114 / GMI1000) (Ralstonia solanacearum) protein is Bifunctional protein FolD.